We begin with the raw amino-acid sequence, 174 residues long: Glutamyl-tRNA(Gln) amidotransferase subunit F, mitochondrial (174 aa).

It belongs to the GatF family. As to quaternary structure, subunit of the heterotrimeric GatFAB amidotransferase (AdT) complex, composed of A, B and F subunits.

The protein localises to the mitochondrion inner membrane. It catalyses the reaction L-glutamyl-tRNA(Gln) + L-glutamine + ATP + H2O = L-glutaminyl-tRNA(Gln) + L-glutamate + ADP + phosphate + H(+). Functionally, allows the formation of correctly charged Gln-tRNA(Gln) through the transamidation of misacylated Glu-tRNA(Gln) in the mitochondria. The reaction takes place in the presence of glutamine and ATP through an activated gamma-phospho-Glu-tRNA(Gln). Required for proper protein synthesis within the mitochondrion. This chain is Glutamyl-tRNA(Gln) amidotransferase subunit F, mitochondrial, found in Kluyveromyces lactis (strain ATCC 8585 / CBS 2359 / DSM 70799 / NBRC 1267 / NRRL Y-1140 / WM37) (Yeast).